A 759-amino-acid polypeptide reads, in one-letter code: Fidgetin (759 aa).

Disordered stretches follow at residues 89-111 (SNYS…PWQP), 200-237 (SQAT…PGYN), 258-293 (VGSG…VPGY), and 337-429 (SYGQ…VMSE). Pro residues-rich tracts occupy residues 221–232 (QPPPPPPPPPAL) and 266–289 (GAPP…PPTT). Polar residues-rich tracts occupy residues 337–347 (SYGQQRSTQSP) and 382–418 (LMPS…SSES). Thr-400 is modified (phosphothreonine). Residues Ala-489 and 529–534 (GTGKTL) contribute to the ATP site.

This sequence belongs to the AAA ATPase family. In terms of assembly, interacts with AKAP8 (via C-terminus). As to expression, widely expressed.

The protein resides in the nucleus matrix. The protein localises to the cytoplasm. Its subcellular location is the cytoskeleton. It localises to the microtubule organizing center. It is found in the centrosome. Its function is as follows. ATP-dependent microtubule severing protein. Severs microtubules along their length and depolymerizes their ends, primarily the minus-end, suppressing microtubule growth from and attachment to centrosomes. Microtubule severing may promote rapid reorganization of cellular microtubule arrays and the release of microtubules from the centrosome following nucleation. Microtubule release from the mitotic spindle poles may allow depolymerization of the microtubule end proximal to the spindle pole, leading to poleward microtubule flux and poleward motion of chromosome. The sequence is that of Fidgetin (Fign) from Mus musculus (Mouse).